The sequence spans 631 residues: Quinoprotein alcohol dehydrogenase PedE (631 aa).

Positions 1–33 (MTIRSLPALSPLALSVRVLLMAGSLALGNVATA) are cleaved as a signal peptide. D53, T56, and D59 together coordinate Ca(2+). E103 contacts pyrroloquinoline quinone. An intrachain disulfide couples C147 to C148. Pyrroloquinoline quinone-binding positions include R153, T197, and 215–217 (HGS). Residue E221 participates in Ca(2+) binding. Residues 250 to 286 (GRLNGKDSTPTGDVKAPSWPDDPTTETGKVEAWSHGG) are disordered. Residues N308 and D358 each contribute to the Ca(2+) site. Residue D358 is the Proton acceptor of the active site. R386 provides a ligand contact to pyrroloquinoline quinone. Residues 421–443 (GRPVENPGQRPAKPLPGETKGKP) are disordered. Pyrroloquinoline quinone contacts are provided by W531 and A595.

It belongs to the bacterial PQQ dehydrogenase family. As to quaternary structure, homodimer. Interacts with cytochrome c550. The cofactor is pyrroloquinoline quinone. Ca(2+) serves as cofactor. Post-translationally, the disulfide ring formed between the two adjacent cysteine residues Cys-147 and Cys-148 is essential for efficient electron transfer at pH 7 from PedE to its natural electron acceptor cytochrome c550.

It is found in the periplasm. It catalyses the reaction a primary alcohol + 2 Fe(III)-[cytochrome c] = an aldehyde + 2 Fe(II)-[cytochrome c] + 2 H(+). The catalysed reaction is ethanol + 2 Fe(III)-[cytochrome c] = acetaldehyde + 2 Fe(II)-[cytochrome c] + 2 H(+). The enzyme catalyses butan-1-ol + 2 Fe(III)-[cytochrome c] = butanal + 2 Fe(II)-[cytochrome c] + 2 H(+). It carries out the reaction butan-2-ol + 2 Fe(III)-[cytochrome c] = butan-2-one + 2 Fe(II)-[cytochrome c] + 2 H(+). It catalyses the reaction 2-phenylethanol + 2 Fe(III)-[cytochrome c] = 2-phenylacetaldehyde + 2 Fe(II)-[cytochrome c] + 2 H(+). The catalysed reaction is octan-1-ol + 2 Fe(III)-[cytochrome c] = octanal + 2 Fe(II)-[cytochrome c] + 2 H(+). The enzyme catalyses hexan-1-ol + 2 Fe(III)-[cytochrome c] = hexanal + 2 Fe(II)-[cytochrome c] + 2 H(+). It carries out the reaction cinnamyl alcohol + 2 Fe(III)-[cytochrome c] = cinnamaldehyde + 2 Fe(II)-[cytochrome c] + 2 H(+). It catalyses the reaction farnesol + 2 Fe(III)-[cytochrome c] = farnesal + 2 Fe(II)-[cytochrome c] + 2 H(+). The catalysed reaction is an aldehyde + 2 Fe(III)-[cytochrome c] + H2O = a carboxylate + 2 Fe(II)-[cytochrome c] + 3 H(+). The enzyme catalyses acetaldehyde + 2 Fe(III)-[cytochrome c] + H2O = 2 Fe(II)-[cytochrome c] + acetate + 3 H(+). It carries out the reaction butanal + 2 Fe(III)-[cytochrome c] + H2O = butanoate + 2 Fe(II)-[cytochrome c] + 3 H(+). It catalyses the reaction hexanal + 2 Fe(III)-[cytochrome c] + H2O = hexanoate + 2 Fe(II)-[cytochrome c] + 3 H(+). The catalysed reaction is octanal + 2 Fe(III)-[cytochrome c] + H2O = octanoate + 2 Fe(II)-[cytochrome c] + 3 H(+). Functionally, alcohol dehydrogenase that catalyzes the oxidation of a range of substrates, including linear and aromatic primary and secondary alcohols, as well as aldehydes, allowing bacterial growth with a variety of volatile organic compounds (VOCs) as carbon and energy sources. Uses a specific inducible cytochrome c550, encoded by the adjacent gene in the locus, as electron acceptor. This Pseudomonas putida (strain ATCC 47054 / DSM 6125 / CFBP 8728 / NCIMB 11950 / KT2440) protein is Quinoprotein alcohol dehydrogenase PedE.